The primary structure comprises 189 residues: Lumazine protein (189 aa).

Lumazine-binding repeat units follow at residues 1 to 96 (MFKG…LGKG) and 97 to 189 (ALTG…SNEW).

6,7-dimethyl-8-(1-D-ribityl)lumazine is required as a cofactor.

In terms of biological role, antenna protein that modulates the color of the bioluminescence emission of the luciferase. In the presence of LumP, luciferase emission is shifted to higher energy values (shorter wavelength). In Photobacterium phosphoreum, this protein is Lumazine protein (luxL).